We begin with the raw amino-acid sequence, 284 residues long: Ribosomal RNA small subunit methyltransferase A (284 aa).

The S-adenosyl-L-methionine site is built by Asn-33, Leu-35, Gly-60, Glu-81, Asp-101, and Asn-124.

It belongs to the class I-like SAM-binding methyltransferase superfamily. rRNA adenine N(6)-methyltransferase family. RsmA subfamily.

Its subcellular location is the cytoplasm. The catalysed reaction is adenosine(1518)/adenosine(1519) in 16S rRNA + 4 S-adenosyl-L-methionine = N(6)-dimethyladenosine(1518)/N(6)-dimethyladenosine(1519) in 16S rRNA + 4 S-adenosyl-L-homocysteine + 4 H(+). Functionally, specifically dimethylates two adjacent adenosines (A1518 and A1519) in the loop of a conserved hairpin near the 3'-end of 16S rRNA in the 30S particle. May play a critical role in biogenesis of 30S subunits. The polypeptide is Ribosomal RNA small subunit methyltransferase A (Chlamydia felis (strain Fe/C-56) (Chlamydophila felis)).